The chain runs to 628 residues: ATP-dependent zinc metalloprotease FtsH (628 aa).

At M1 to T7 the chain is on the stromal side. Residues L8–G28 form a helical membrane-spanning segment. Residues P29–V118 lie on the Lumenal side of the membrane. A helical transmembrane segment spans residues W119 to F139. At R140 to F628 the chain is on the stromal side. G213–T220 is an ATP binding site. H434 lines the Zn(2+) pocket. The active site involves E435. Zn(2+)-binding residues include H438 and D512.

The protein in the central section; belongs to the AAA ATPase family. This sequence in the C-terminal section; belongs to the peptidase M41 family. As to quaternary structure, homohexamer. Zn(2+) is required as a cofactor.

It is found in the plastid. It localises to the chloroplast thylakoid membrane. Its function is as follows. Acts as a processive, ATP-dependent zinc metallopeptidase. The sequence is that of ATP-dependent zinc metalloprotease FtsH from Porphyra purpurea (Red seaweed).